A 231-amino-acid polypeptide reads, in one-letter code: Protein usf (231 aa).

This chain is Protein usf (usf), found in Aquifex pyrophilus.